Consider the following 324-residue polypeptide: Coproporphyrin III ferrochelatase (324 aa).

Fe(2+) is bound by residues His-184 and Glu-266.

This sequence belongs to the ferrochelatase family.

The protein resides in the cytoplasm. It catalyses the reaction Fe-coproporphyrin III + 2 H(+) = coproporphyrin III + Fe(2+). It functions in the pathway porphyrin-containing compound metabolism; protoheme biosynthesis. Involved in coproporphyrin-dependent heme b biosynthesis. Catalyzes the insertion of ferrous iron into coproporphyrin III to form Fe-coproporphyrin III. The polypeptide is Coproporphyrin III ferrochelatase (Lactiplantibacillus plantarum (strain ATCC BAA-793 / NCIMB 8826 / WCFS1) (Lactobacillus plantarum)).